Consider the following 362-residue polypeptide: Peptide chain release factor 1 (362 aa).

Q240 is modified (N5-methylglutamine).

This sequence belongs to the prokaryotic/mitochondrial release factor family. In terms of processing, methylated by PrmC. Methylation increases the termination efficiency of RF1.

It localises to the cytoplasm. In terms of biological role, peptide chain release factor 1 directs the termination of translation in response to the peptide chain termination codons UAG and UAA. This is Peptide chain release factor 1 from Bifidobacterium longum subsp. infantis (strain ATCC 15697 / DSM 20088 / JCM 1222 / NCTC 11817 / S12).